Reading from the N-terminus, the 521-residue chain is Proactivator polypeptide-like 1 (521 aa).

Residues 1–17 (MLCALLLLPSLLGATRA) form the signal peptide. A propeptide spanning residues 18–59 (SPTSGPQECAKGSTVWCQDLQTAARCGAVGYCQGAVWNKPTA) is cleaved from the precursor. The Saposin A-type 1 domain occupies 19–59 (PTSGPQECAKGSTVWCQDLQTAARCGAVGYCQGAVWNKPTA). Saposin B-type domains lie at 60–144 (KSLP…EPLQ) and 180–258 (EGAL…EELG). 3 disulfides stabilise this stretch: Cys64–Cys140, Cys67–Cys134, and Cys95–Cys107. Positions 146-180 (HLATLRPLSKEDTFEAVAPFMANGPLTFHPRQAPE) are excised as a propeptide. 3 disulfide bridges follow: Cys184-Cys254, Cys187-Cys248, and Cys213-Cys224. Asn201 carries N-linked (GlcNAc...) asparagine glycosylation. Positions 259–288 (APARLTQVVAMDGVPSLELGLPRKQSEMQM) are excised as a propeptide. 2 Saposin B-type domains span residues 290–370 (AGVT…GNRR) and 392–473 (QGSF…HGPR). Cystine bridges form between Cys294–Cys366, Cys297–Cys360, and Cys325–Cys336. N-linked (GlcNAc...) asparagine glycosylation is present at Asn311. Positions 370 to 391 (RRARAVHDAYAIVPSPEWDAEN) are excised as a propeptide. 3 cysteine pairs are disulfide-bonded: Cys396–Cys469, Cys399–Cys463, and Cys427–Cys438. A propeptide spanning residues 474–521 (TPLLGTDQCALGPSFWCRSQEAAKLCNAVQHCQKHVWKEMHLHAGEHA) is cleaved from the precursor. The region spanning 475–515 (PLLGTDQCALGPSFWCRSQEAAKLCNAVQHCQKHVWKEMHL) is the Saposin A-type 2 domain.

The protein localises to the secreted. May activate the lysosomal degradation of sphingolipids. In Homo sapiens (Human), this protein is Proactivator polypeptide-like 1 (PSAPL1).